We begin with the raw amino-acid sequence, 598 residues long: IQ calmodulin-binding motif-containing protein 1 (598 aa).

Residues 1–157 (MKPAGTDPRI…SLFWLLGGHV (157 aa)) are interaction with BBS1, BBS8 and BBS9. The interval 287–598 (QEVEEQKLHK…MLFIGGTKPP (312 aa)) is interaction with CEP290, BBS1, BBS2, BBS4, BBS5, BBS7, BBS8 and BBS9. IQ domains follow at residues 294-317 (LHKA…LKKL), 318-338 (PSAV…MMLE), 387-416 (EEKS…SLTE), and 417-437 (YKAA…CRKK). Residues 336–362 (MLELNRQKEEEDLRLKLQLQRQRAMRL) are a coiled coil. Positions 530–598 (AEGKEPEQFL…MLFIGGTKPP (69 aa)) are interaction with BBS1, BBS2, BBS4, BBS7, BBS8 and BBS9.

Interacts with calmodulin. Interacts with CEP290/NPHP6; IQCB1/NPHP5 and CEP290/NPHP6; are proposed to form a functional NPHP5-6 module localized to the centrosome. Interacts with ATXN10. Interacts with NPHP1, INVS, NPHP4 and RPGRIP1L; these interactions likely require additional interactors. Associates with the BBSome complex; interacts with BBS1, BBS2, BBS4, BBS5, BBS7, BBS8 and BBS9. As to expression, localized to the outer segment and connecting cilia of photoreceptor cells.

The protein resides in the cytoplasm. The protein localises to the cytoskeleton. Its subcellular location is the microtubule organizing center. It is found in the centrosome. Involved in ciliogenesis. The function in an early step in cilia formation depends on its association with CEP290/NPHP6. Involved in regulation of the BBSome complex integrity, specifically for presence of BBS2 and BBS5 in the complex, and in ciliary targeting of selected BBSome cargos. May play a role in controlling entry of the BBSome complex to cilia possibly implicating CEP290/NPHP6. This Mus musculus (Mouse) protein is IQ calmodulin-binding motif-containing protein 1 (Iqcb1).